The primary structure comprises 538 residues: Telomerase Cajal body protein 1 (538 aa).

The disordered stretch occupies residues 1 to 53; the sequence is MKTSEERLVVPDSLSSDQAPAPVPQGSPVDENTDSEPVPQPCGGDDRSQVAAD. Residues Ser27 and Ser87 each carry the phosphoserine modification. The tract at residues 92–128 is disordered; sequence EQELSENVSLPVEDTNQPELASGEDVEGVSEEPGPVD. Positions 113 to 128 are enriched in acidic residues; the sequence is SGEDVEGVSEEPGPVD. WD repeat units lie at residues 154-194, 210-255, 260-301, 311-352, 353-393, and 399-438; these read AHSE…YSAT, EGDT…LRAS, NHLD…RDCE, GQSG…ALLG, GHQG…HLLW, and VTTNQRIYFDLDPSGQFLVSGNTNGMVSVWDISGAFGDSS. Disordered regions lie at residues 471–491 and 509–538; these read QRMFPEPTNSGDEGEPEGDLP and CGGGPDPSSPNDPQDEKGQGRAEGCGDGLI. Thr478 bears the Phosphothreonine mark. Ser480 carries the post-translational modification Phosphoserine. Gly residues predominate over residues 529–538; the sequence is RAEGCGDGLI.

The protein belongs to the TCAB1 family. Component of the telomerase holoenzyme complex composed of one molecule of TERT, one molecule of WRAP53/TCAB1, two molecules of H/ACA ribonucleoprotein complex subunits DKC1, NOP10, NHP2 and GAR1, and a telomerase RNA template component (TERC). The telomerase holoenzyme complex is associated with TEP1, SMG6/EST1A and POT1. Interacts with the chaperonin-containing T-complex (TRiC) complex; which mediates the folding of WRAP53/TCAB1. Interacts with COIL. Interacts with SMN1. Interacts with RNF8. Interacts with histone H2AX. In terms of tissue distribution, preferentially expressed in testis.

It localises to the nucleus. It is found in the cajal body. The protein localises to the chromosome. The protein resides in the telomere. Functionally, RNA chaperone that plays a key role in telomere maintenance and RNA localization to Cajal bodies. Specifically recognizes and binds the Cajal body box (CAB box) present in both small Cajal body RNAs (scaRNAs) and telomerase RNA template component (TERC). Essential component of the telomerase holoenzyme complex, a ribonucleoprotein complex essential for the replication of chromosome termini that elongates telomeres in most eukaryotes. In the telomerase holoenzyme complex, required to stimulate the catalytic activity of the complex. Acts by specifically binding the CAB box of the TERC RNA and controlling the folding of the CR4/CR5 region of the TERC RNA, a critical step for telomerase activity. In addition, also controls telomerase holoenzyme complex localization to Cajal body. During S phase, required for delivery of TERC to telomeres during S phase and for telomerase activity. In addition to its role in telomere maintenance, also required for Cajal body formation, probably by mediating localization of scaRNAs to Cajal bodies. Also plays a role in DNA repair: relocalizes to sites of DNA double-strand breaks in response to DNA damage and promotes the repair of DNA double-strand breaks. Acts by recruiting the ubiquitin ligase RNF8 to DNA breaks and promote both homologous recombination (HR) and non-homologous end joining (NHEJ). In Mesocricetus auratus (Golden hamster), this protein is Telomerase Cajal body protein 1.